Consider the following 82-residue polypeptide: Ferredoxin (82 aa).

Residues 3–31 form the 4Fe-4S ferredoxin-type domain; the sequence is KYTIVDKDTCIACGACGAAAPDIYDYDDE. Residues C12, C15, C18, and C62 each contribute to the [4Fe-4S] cluster site.

It depends on [4Fe-4S] cluster as a cofactor.

Functionally, ferredoxins are iron-sulfur proteins that transfer electrons in a wide variety of metabolic reactions. This ferredoxin may act as a phosphodonor to cytochrome P450 BioI. The polypeptide is Ferredoxin (fer) (Bacillus subtilis (strain 168)).